The following is an 854-amino-acid chain: Putative COX1/OXI3 intron 2 protein (854 aa).

The 285-residue stretch at 329 to 613 folds into the Reverse transcriptase domain; sequence LSKDINTNMF…EGVSFLGYDV (285 aa).

The protein resides in the mitochondrion. The protein is Putative COX1/OXI3 intron 2 protein (AI2) of Saccharomyces cerevisiae (strain ATCC 204508 / S288c) (Baker's yeast).